The following is a 793-amino-acid chain: Putative potassium transporter 12 (793 aa).

Residues 1–54 (MASISDSETTNHGSIWDLDQNLDQPMDEEASRLKNMYTEKKFSSILLLRLAFQS) lie on the Cytoplasmic side of the membrane. A helical transmembrane segment spans residues 55 to 75 (LGVVFGDLGTSPLYVFYNIFP). At 76 to 87 (HGVDDDEDVIGA) the chain is on the extracellular side. The chain crosses the membrane as a helical span at residues 88–108 (LSLIIYTLTLIPLMKYVFVVL). Residues 109–175 (RANDNGQGGT…EGHVYKKNCL (67 aa)) are Cytoplasmic-facing. Residues 176-196 (LILVLIGTCTAIGDGILTPAI) form a helical membrane-spanning segment. The Extracellular portion of the chain corresponds to 197 to 215 (SVLSASGGIRVQNQKMSTD). The chain crosses the membrane as a helical span at residues 216–236 (VVVVVAVIILIGLFSMQHYGT). Over 237-238 (DK) the chain is Cytoplasmic. Residues 239–259 (VGWLFAPIVLLWFILIGTIGA) form a helical membrane-spanning segment. The Extracellular portion of the chain corresponds to 260–289 (LNIHKYNSSVLKAYNPVYIYRYFRRGKSES). Asn-266 carries N-linked (GlcNAc...) asparagine glycosylation. A helical transmembrane segment spans residues 290–310 (WTSLGGIMLSITGTEALYADL). Over 311 to 315 (CHFPV) the chain is Cytoplasmic. The chain crosses the membrane as a helical span at residues 316–338 (LAIQIAFTLVVFPCLLLAYTGQA). Residues 339 to 359 (AYIISNKDHVVDAFYRSIPDT) are Extracellular-facing. Residues 360 to 380 (IYWPVFIIATLAAIVASQATI) traverse the membrane as a helical segment. At 381–411 (SATYSIIKQALALGCFPRVSVVHTSKKFLGQ) the chain is on the cytoplasmic side. The chain crosses the membrane as a helical span at residues 412–432 (IYIPDINWVLMILCIAVTAGF). The Extracellular segment spans residues 433–444 (KNQSQIGNAYGT). An N-linked (GlcNAc...) asparagine glycan is attached at Asn-434. A helical membrane pass occupies residues 445–465 (AVVIVMLVTTFLMVPIMLLVW). Topologically, residues 466–468 (KSH) are cytoplasmic. A helical transmembrane segment spans residues 469–489 (WILVVIFIVLSLMVELPYFTA). Over 490 to 496 (CINKVDQ) the chain is Extracellular. The chain crosses the membrane as a helical span at residues 497-517 (GGWVPLVVATTCFIIMYVWHF). Residues 518–793 (CTVKRYEFEM…LLNVGQIYYI (276 aa)) are Cytoplasmic-facing.

It belongs to the HAK/KUP transporter (TC 2.A.72.3) family.

Its subcellular location is the membrane. In terms of biological role, high-affinity potassium transporter. The sequence is that of Putative potassium transporter 12 (HAK12) from Oryza sativa subsp. japonica (Rice).